The following is a 307-amino-acid chain: Cilia-and flagella-associated protein 96 (307 aa).

Disordered regions lie at residues 73–102 and 218–279; these read YSDP…SSGE and HSQK…GPKT.

The protein belongs to the CFAP96 family.

The protein resides in the cytoplasm. The protein localises to the cytoskeleton. It localises to the microtubule organizing center. Its subcellular location is the centrosome. This Xenopus laevis (African clawed frog) protein is Cilia-and flagella-associated protein 96 (cfap96.L).